The following is a 73-amino-acid chain: MKIISKRRAMTIYRQHPESRIFRYCTGKYQWHGSVCHYTGRDVPDIAGVLAVYAERRQDRNGPYTCLMSITLN.

The protein belongs to the YeeT/YkfH/YpjJ family.

This is an uncharacterized protein from Escherichia coli (strain K12).